Reading from the N-terminus, the 236-residue chain is Phosphoribosylaminoimidazole-succinocarboxamide synthase (236 aa).

It belongs to the SAICAR synthetase family.

It catalyses the reaction 5-amino-1-(5-phospho-D-ribosyl)imidazole-4-carboxylate + L-aspartate + ATP = (2S)-2-[5-amino-1-(5-phospho-beta-D-ribosyl)imidazole-4-carboxamido]succinate + ADP + phosphate + 2 H(+). The protein operates within purine metabolism; IMP biosynthesis via de novo pathway; 5-amino-1-(5-phospho-D-ribosyl)imidazole-4-carboxamide from 5-amino-1-(5-phospho-D-ribosyl)imidazole-4-carboxylate: step 1/2. This chain is Phosphoribosylaminoimidazole-succinocarboxamide synthase, found in Campylobacter jejuni subsp. jejuni serotype O:6 (strain 81116 / NCTC 11828).